The sequence spans 246 residues: Tyrosine recombinase XerD-like (246 aa).

The 72-residue stretch at 1–72 (MINDINNFIE…AVNQFLFFLY (72 aa)) folds into the Core-binding (CB) domain. The Tyr recombinase domain maps to 84 to 246 (QETEKITLTQ…TPITLERYYR (163 aa)). Active-site residues include Lys-149 and Arg-212. The active-site O-(3'-phospho-DNA)-tyrosine intermediate is the Tyr-244.

Belongs to the 'phage' integrase family. XerD-like subfamily.

The protein localises to the cytoplasm. Its function is as follows. Putative tyrosine recombinase. Not involved in the cutting and rejoining of the recombining DNA molecules on dif(SL) site. The protein is Tyrosine recombinase XerD-like of Streptococcus agalactiae serotype III (strain NEM316).